A 735-amino-acid polypeptide reads, in one-letter code: Type-3 glutamine synthetase (735 aa).

A GS beta-grasp domain is found at 89–183 (THYCHWFLPL…IPTAFCSWTG (95 aa)). The GS catalytic domain occupies 188 to 621 (QKTPLLRSME…SLYDLVSTLV (434 aa)).

This sequence belongs to the glutamine synthetase family. Type 3 subfamily. Homohexamer.

The catalysed reaction is L-glutamate + NH4(+) + ATP = L-glutamine + ADP + phosphate + H(+). This chain is Type-3 glutamine synthetase (glnA3), found in Dictyostelium discoideum (Social amoeba).